Here is a 307-residue protein sequence, read N- to C-terminus: Probable transposase for transposon Tn903 (307 aa).

In terms of biological role, required for transposition of transposon Tn903. The protein is Probable transposase for transposon Tn903 of Escherichia coli.